The primary structure comprises 275 residues: Intercellular adhesion molecule 2 (275 aa).

Positions 1 to 24 are cleaved as a signal peptide; it reads MSSFGYRTLTVALFALICCPGSDE. Topologically, residues 25-223 are extracellular; that stretch reads KVFEVHVRPK…EIYEPVSDSQ (199 aa). The Ig-like C2-type 1 domain occupies 41–98; it reads KASLEVNCSTTCNQPEVGGLETSLDKILLDEQAQWKHYLVSNISHDTVLQCHFTCSGK. Asn47, Asn82, Asn105, Asn153, Asn158, Asn176, and Asn187 each carry an N-linked (GlcNAc...) asparagine glycan. 2 disulfide bridges follow: Cys48–Cys91 and Cys52–Cys95. The Ig-like C2-type 2 domain maps to 127 to 197; the sequence is GKSFTIECRV…FSCLAVLDLI (71 aa). Cys134 and Cys190 are oxidised to a cystine. The helical transmembrane segment at 224–248 threads the bilayer; sequence MVIIVTVVSVLLSLFVTSVLLCFIF. Topologically, residues 249–275 are cytoplasmic; it reads GQHLRQQRMGTYGVRAAWRRLPQAFRP. Residues 251–275 form a required for interaction with EZR, MSN and RDX and co-localization to microvilli region; that stretch reads HLRQQRMGTYGVRAAWRRLPQAFRP.

The protein belongs to the immunoglobulin superfamily. ICAM family. As to quaternary structure, interacts with RDX, EZR and MSN.

The protein resides in the membrane. The protein localises to the cell projection. It is found in the microvillus. ICAM proteins are ligands for the leukocyte adhesion protein LFA-1 (integrin alpha-L/beta-2). ICAM2 may play a role in lymphocyte recirculation by blocking LFA-1-dependent cell adhesion. It mediates adhesive interactions important for antigen-specific immune response, NK-cell mediated clearance, lymphocyte recirculation, and other cellular interactions important for immune response and surveillance. This Gorilla gorilla gorilla (Western lowland gorilla) protein is Intercellular adhesion molecule 2 (ICAM2).